Reading from the N-terminus, the 418-residue chain is AA14 family lytic polysaccharide monooxygenase B (418 aa).

Residues 1–18 (MIPVFLAAVAAFLPLTSG) form the signal peptide. N-linked (GlcNAc...) asparagine glycosylation is found at Asn31, Asn94, and Asn151. 4 disulfide bridges follow: Cys85-Cys108, Cys127-Cys154, Cys171-Cys176, and Cys178-Cys200. N-linked (GlcNAc...) asparagine glycans are attached at residues Asn201 and Asn235. A disulfide bridge links Cys220 with Cys236. A compositionally biased stretch (low complexity) spans 307–343 (AAATPAPSSSGSSPSSSSPGSSSTASTTSTSGPRPSA). A disordered region spans residues 307-364 (AAATPAPSSSGSSPSSSSPGSSSTASTTSTSGPRPSARGFRRSTGERPPTGVPTPRKS).

It belongs to the polysaccharide monooxygenase AA14 family. The cofactor is Cu(2+).

The protein localises to the secreted. Its function is as follows. Lytic polysaccharide monooxygenase (LPMO) that oxidatively cleaves xylan with both C1 and C4 regioselectivity and that specifically targets the protective shield made by heteroxylans that cover cellulose microfibrils in wood. Catalysis by LPMOs requires the reduction of the active-site copper from Cu(II) to Cu(I) by a reducing agent and H(2)O(2) or O(2) as a cosubstrate. Cleavage occurs only when xylans are bound to cellulose and not when they are in solution. Increases the efficiency of wood saccharification through oxidative cleavage of highly refractory xylan-coated cellulose fibers via synergistic relationship with xylan-active enzymes, xylobiohydrolases and cellobiohydrolases. This chain is AA14 family lytic polysaccharide monooxygenase B, found in Trametes coccinea (strain BRFM310) (Pycnoporus coccineus).